The primary structure comprises 220 residues: Catechol O-methyltransferase (220 aa).

S-adenosyl-L-methionine is bound by residues valine 44, glutamate 66, 68-69 (GT), serine 74, glutamate 92, and alanine 121. Aspartate 139 serves as a coordination point for a divalent metal cation. Residue aspartate 141 participates in S-adenosyl-L-methionine binding. Aspartate 165 and asparagine 166 together coordinate a divalent metal cation.

This sequence belongs to the class I-like SAM-binding methyltransferase superfamily. Cation-dependent O-methyltransferase family. In terms of assembly, homodimer. The cofactor is a divalent metal cation.

The enzyme catalyses a catechol + S-adenosyl-L-methionine = a guaiacol + S-adenosyl-L-homocysteine + H(+). With respect to regulation, inhibited by EDTA. Catechol O-methyltransferase that can use various catechol-like compounds such as gallic acid (GA), 3,4-dihydroxy-5-methoxy-benzoic acid (5OMeBA), protocatechuic acid (PCA), 3,4-dihydroxy-benzaldehyde (DHA), dopamine, caffeic acid (CA), luteolin, quercetin, and 5-hydroxyuridine. The chain is Catechol O-methyltransferase from Mycobacterium tuberculosis (strain ATCC 25618 / H37Rv).